Reading from the N-terminus, the 163-residue chain is MPSFDIVSEVDMREVQNAVENATRELETRFDFRNVTASFELNEKNQTIKVTSESDFQVNQLLDILRAKLLKRGIEGSSIEVPEEFDHSGKTWSVEAKLKQGIDSAMAKKIVKLIKDSKLKVQAQIQGEQVRVTGKARDDLQQTIALVRGGNLGQPFQFNNFRD.

The protein belongs to the YajQ family.

Functionally, nucleotide-binding protein. This is Nucleotide-binding protein ESA_02876 from Cronobacter sakazakii (strain ATCC BAA-894) (Enterobacter sakazakii).